Consider the following 178-residue polypeptide: Ribosome maturation factor RimP (178 aa).

Belongs to the RimP family.

The protein localises to the cytoplasm. Its function is as follows. Required for maturation of 30S ribosomal subunits. The polypeptide is Ribosome maturation factor RimP (Streptococcus pyogenes serotype M18 (strain MGAS8232)).